The sequence spans 241 residues: Glucosamine-6-phosphate deaminase (241 aa).

The active-site Proton acceptor; for enolization step is Asp-67. Residue Asn-136 is the For ring-opening step of the active site. His-138 (proton acceptor; for ring-opening step) is an active-site residue. Glu-143 serves as the catalytic For ring-opening step.

It belongs to the glucosamine/galactosamine-6-phosphate isomerase family. NagB subfamily.

It carries out the reaction alpha-D-glucosamine 6-phosphate + H2O = beta-D-fructose 6-phosphate + NH4(+). The protein operates within amino-sugar metabolism; N-acetylneuraminate degradation; D-fructose 6-phosphate from N-acetylneuraminate: step 5/5. Catalyzes the reversible isomerization-deamination of glucosamine 6-phosphate (GlcN6P) to form fructose 6-phosphate (Fru6P) and ammonium ion. The sequence is that of Glucosamine-6-phosphate deaminase from Alkaliphilus oremlandii (strain OhILAs) (Clostridium oremlandii (strain OhILAs)).